We begin with the raw amino-acid sequence, 622 residues long: Procollagen galactosyltransferase 1 (622 aa).

The N-terminal stretch at 1–29 (MAAAPRAGRRRGQPLLALLLLLLAPLPPG) is a signal peptide. Asparagine 96, asparagine 184, and asparagine 381 each carry an N-linked (GlcNAc...) asparagine glycan. Residues 588–606 (RAKSQKMREQQALSREAKN) show a composition bias toward basic and acidic residues. The disordered stretch occupies residues 588–622 (RAKSQKMREQQALSREAKNSDVLQSPLDSAARDEL). The Endoplasmic reticulum retention motif signature appears at 619 to 622 (RDEL).

Belongs to the glycosyltransferase 25 family. Post-translationally, N-glycosylated. In terms of tissue distribution, ubiquitous with higher levels in placenta, heart, lung and spleen.

It localises to the endoplasmic reticulum lumen. It carries out the reaction (5R)-5-hydroxy-L-lysyl-[collagen] + UDP-alpha-D-galactose = (5R)-5-O-(beta-D-galactosyl)-5-hydroxy-L-lysyl-[collagen] + UDP + H(+). Its function is as follows. Beta-galactosyltransferase that transfers beta-galactose to hydroxylysine residues of type I collagen. By acting on collagen glycosylation, facilitates the formation of collagen triple helix. Also involved in the biosynthesis of collagen type IV. The protein is Procollagen galactosyltransferase 1 (COLGALT1) of Homo sapiens (Human).